Reading from the N-terminus, the 382-residue chain is Chaperone protein DnaJ (382 aa).

Residues aspartate 5–glycine 69 enclose the J domain. Residues glutamine 104–aspartate 123 are disordered. The CR-type zinc-finger motif lies at glycine 138 to arginine 220. Positions 151, 154, 168, 171, 194, 197, 208, and 211 each coordinate Zn(2+). CXXCXGXG motif repeat units follow at residues cysteine 151–glycine 158, cysteine 168–glycine 175, cysteine 194–glycine 201, and cysteine 208–glycine 215. A disordered region spans residues alanine 358–asparagine 382.

It belongs to the DnaJ family. Homodimer. Zn(2+) serves as cofactor.

The protein resides in the cytoplasm. Functionally, participates actively in the response to hyperosmotic and heat shock by preventing the aggregation of stress-denatured proteins and by disaggregating proteins, also in an autonomous, DnaK-independent fashion. Unfolded proteins bind initially to DnaJ; upon interaction with the DnaJ-bound protein, DnaK hydrolyzes its bound ATP, resulting in the formation of a stable complex. GrpE releases ADP from DnaK; ATP binding to DnaK triggers the release of the substrate protein, thus completing the reaction cycle. Several rounds of ATP-dependent interactions between DnaJ, DnaK and GrpE are required for fully efficient folding. Also involved, together with DnaK and GrpE, in the DNA replication of plasmids through activation of initiation proteins. The protein is Chaperone protein DnaJ of Levilactobacillus brevis (strain ATCC 367 / BCRC 12310 / CIP 105137 / JCM 1170 / LMG 11437 / NCIMB 947 / NCTC 947) (Lactobacillus brevis).